Consider the following 64-residue polypeptide: Large ribosomal subunit protein bL33c (64 aa).

It belongs to the bacterial ribosomal protein bL33 family.

Its subcellular location is the plastid. It localises to the chloroplast. The chain is Large ribosomal subunit protein bL33c from Thalassiosira pseudonana (Marine diatom).